A 212-amino-acid polypeptide reads, in one-letter code: Thymidylate kinase (212 aa).

ATP is bound at residue 10–17 (GIDGCGKT).

It belongs to the thymidylate kinase family.

It carries out the reaction dTMP + ATP = dTDP + ADP. Its function is as follows. Phosphorylation of dTMP to form dTDP in both de novo and salvage pathways of dTTP synthesis. The chain is Thymidylate kinase from Prochlorococcus marinus (strain MIT 9312).